The sequence spans 567 residues: Hexose transporter HXT16 (567 aa).

The span at 1–19 (MASEQSSPEINADNLNSSA) shows a compositional bias: polar residues. A disordered region spans residues 1-32 (MASEQSSPEINADNLNSSAADVHVQPPGEKEW). The Cytoplasmic segment spans residues 1-55 (MASEQSSPEINADNLNSSAADVHVQPPGEKEWSDGFYDKEVINGNTPDAPKRGFL). A helical membrane pass occupies residues 56 to 76 (GYLIIYLLCYPVSFGGFLPGW). The Extracellular portion of the chain corresponds to 77 to 112 (DSGITAGFINMDNFKMNFGSYKHSTGEYYLSNVRMG). A helical membrane pass occupies residues 113–133 (LLVAMFSVGCSIGGVAFARLA). The Cytoplasmic segment spans residues 134–139 (DTLGRR). Residues 140 to 160 (LAIVIVVLVYMVGAIIQISSN) form a helical membrane-spanning segment. Residues 161 to 170 (HKWYQYFVGK) are Extracellular-facing. A helical transmembrane segment spans residues 171–191 (IIYGLGAGGCSVLCPMLLSEI). The Cytoplasmic portion of the chain corresponds to 192–197 (APTDLR). A helical transmembrane segment spans residues 198–218 (GGLVSLYQLNMTFGIFLGYCS). The Extracellular segment spans residues 219–232 (VYGTRKYSNTAQWR). Residues 233 to 253 (IPVGLCFLWALIIIVGMLLVP) traverse the membrane as a helical segment. Residues 254–336 (ESPRYLIECE…VQTFLQLTGE (83 aa)) are Cytoplasmic-facing. The helical transmembrane segment at 337-353 (NYFFFYGTTIFKSVGLT) threads the bilayer. The Extracellular portion of the chain corresponds to 354–359 (DGFETS). A helical membrane pass occupies residues 360-377 (IVLGTVNFFSTIIAVMVV). Residues 378–384 (DKIGRRK) lie on the Cytoplasmic side of the membrane. Residues 385-405 (CLLFGAASMMACMVIFASIGV) form a helical membrane-spanning segment. At 406 to 427 (KCLYPHGQDGPSSKGAGNAMIV) the chain is on the extracellular side. Residues 428 to 448 (FTCFYIFCFATTWAPVAYIVV) form a helical membrane-spanning segment. The Cytoplasmic portion of the chain corresponds to 449–465 (AESFPSKVKSKAMSIST). A helical transmembrane segment spans residues 466–486 (AFNWLWQFLIGFFTPFITGSI). Position 487 (histidine 487) is a topological domain, extracellular. A helical transmembrane segment spans residues 488–508 (FYYGYVFVGCLVAMFLYVFFF). Residues 509–567 (LPETIGLSLEETQLLYEEGIKPWKSASWVPPSRRGASSRETEAKKKSWKEVLKFPKSFN) are Cytoplasmic-facing. Residues 533–555 (SASWVPPSRRGASSRETEAKKKS) form a disordered region. Residues 545 to 555 (SSRETEAKKKS) show a composition bias toward basic and acidic residues.

This sequence belongs to the major facilitator superfamily. Sugar transporter (TC 2.A.1.1) family.

It localises to the membrane. In terms of biological role, probable glucose transporter. The sequence is that of Hexose transporter HXT16 (HXT16) from Saccharomyces cerevisiae (strain ATCC 204508 / S288c) (Baker's yeast).